Consider the following 130-residue polypeptide: DNA-directed RNA polymerase subunit omega (130 aa).

Disordered stretches follow at residues 80–99 (PEPD…DADD) and 110–130 (EELL…EEDE). Residues 110–124 (EELLKGLEGLAPREE) are compositionally biased toward basic and acidic residues.

It belongs to the RNA polymerase subunit omega family. In terms of assembly, the RNAP catalytic core consists of 2 alpha, 1 beta, 1 beta' and 1 omega subunit. When a sigma factor is associated with the core the holoenzyme is formed, which can initiate transcription.

The enzyme catalyses RNA(n) + a ribonucleoside 5'-triphosphate = RNA(n+1) + diphosphate. In terms of biological role, promotes RNA polymerase assembly. Latches the N- and C-terminal regions of the beta' subunit thereby facilitating its interaction with the beta and alpha subunits. This Nitrobacter hamburgensis (strain DSM 10229 / NCIMB 13809 / X14) protein is DNA-directed RNA polymerase subunit omega.